Reading from the N-terminus, the 264-residue chain is Major prion protein (264 aa).

Positions 1–24 (MVKSHIGSWILVLFVAMWSDVGLC) are cleaved as a signal peptide. The segment at 25–241 (KKRPKPGGGW…ESQAYYQRGA (217 aa)) is interaction with GRB2, ERI3 and SYN1. Residues 28–118 (PKPGGGWNTG…QWNKPSKPKT (91 aa)) are disordered. 6 tandem repeats follow at residues 54–62 (PQGGGSWGQ), 63–70 (PHGGGWGQ), 71–78 (PHGGSWGQ), 79–86 (PHGGGWGQ), 87–94 (PHGGGWGQ), and 95–103 (PHGGGGWGQ). The 6 X 8 AA tandem repeats of P-H-G-G-G-W-G-Q stretch occupies residues 54–103 (PQGGGSWGQPHGGGWGQPHGGSWGQPHGGGWGQPHGGGWGQPHGGGGWGQ). Gly residues predominate over residues 55-107 (QGGGSWGQPHGGGWGQPHGGSWGQPHGGGWGQPHGGGWGQPHGGGGWGQGGTH). Residues H72, G73, G74, H80, G81, G82, H88, G89, G90, H96, G98, and G99 each coordinate Cu(2+). An intrachain disulfide couples C190 to C225. N-linked (GlcNAc...) asparagine glycosylation is found at N192 and N208. The GPI-anchor amidated alanine moiety is linked to residue A241. The propeptide at 242–264 (SVVLFSSPPVVLLISFLIFLIVG) is removed in mature form.

It belongs to the prion family. As to quaternary structure, monomer and homodimer. Has a tendency to aggregate into amyloid fibrils containing a cross-beta spine, formed by a steric zipper of superposed beta-strands. Soluble oligomers may represent an intermediate stage on the path to fibril formation. Copper binding may promote oligomerization. Interacts with GRB2, APP, ERI3/PRNPIP and SYN1. Mislocalized cytosolically exposed PrP interacts with MGRN1; this interaction alters MGRN1 subcellular location and causes lysosomal enlargement. Interacts with KIAA1191.

Its subcellular location is the cell membrane. It localises to the golgi apparatus. Its function is as follows. Its primary physiological function is unclear. Has cytoprotective activity against internal or environmental stresses. May play a role in neuronal development and synaptic plasticity. May be required for neuronal myelin sheath maintenance. May play a role in iron uptake and iron homeostasis. Soluble oligomers are toxic to cultured neuroblastoma cells and induce apoptosis (in vitro). Association with GPC1 (via its heparan sulfate chains) targets PRNP to lipid rafts. Also provides Cu(2+) or Zn(2+) for the ascorbate-mediated GPC1 deaminase degradation of its heparan sulfate side chains. This chain is Major prion protein (PRNP), found in Boselaphus tragocamelus (Nilgai).